Here is a 190-residue protein sequence, read N- to C-terminus: Putative serine carboxypeptidase-like 54 (190 aa).

Positions 1-25 (MATKTFSLPFLLIVCIFSQLSSTFG) are cleaved as a signal peptide. 3 N-linked (GlcNAc...) asparagine glycosylation sites follow: asparagine 58, asparagine 59, and asparagine 105.

The protein belongs to the peptidase S10 family.

It is found in the secreted. The sequence is that of Putative serine carboxypeptidase-like 54 (SCPL54) from Arabidopsis thaliana (Mouse-ear cress).